Reading from the N-terminus, the 853-residue chain is Rod cGMP-specific 3',5'-cyclic phosphodiesterase subunit beta (853 aa).

Serine 2 is subject to N-acetylserine. GAF domains are found at residues 71-220 (NMER…TLNL) and 252-429 (DIER…GWSV). The PDEase domain occupies 481–814 (EEDELGKILK…KEWKALADEY (334 aa)). Residue histidine 557 is the Proton donor of the active site. The a divalent metal cation site is built by histidine 561, histidine 597, aspartate 598, and aspartate 718. A Cysteine methyl ester modification is found at cysteine 850. A lipid anchor (S-geranylgeranyl cysteine) is attached at cysteine 850. The propeptide at 851–853 (RIL) is removed in mature form.

It belongs to the cyclic nucleotide phosphodiesterase family. In terms of assembly, oligomer composed of two catalytic chains (alpha and beta), an inhibitory chain (gamma) and the delta chain. It depends on a divalent metal cation as a cofactor.

The protein localises to the membrane. Its subcellular location is the cell projection. It is found in the cilium. The protein resides in the photoreceptor outer segment. The enzyme catalyses 3',5'-cyclic GMP + H2O = GMP + H(+). Necessary for the formation of a functional phosphodiesterase holoenzyme. Involved in retinal circadian rhythm photoentrainment via modulation of UVA and orange light-induced phase-shift of the retina clock. May participate in processes of transmission and amplification of the visual signal. In terms of biological role, rod-specific cGMP phosphodiesterase that catalyzes the hydrolysis of 3',5'-cyclic GMP. Necessary for the formation of a functional phosphodiesterase holoenzyme. Involved in retinal circadian rhythm photoentrainment via modulation of UVA and orange light-induced phase-shift of the retina clock. May participate in processes of transmission and amplification of the visual signal. This chain is Rod cGMP-specific 3',5'-cyclic phosphodiesterase subunit beta (PDE6B), found in Bos taurus (Bovine).